Consider the following 375-residue polypeptide: Sulfite efflux pump SSU1 (375 aa).

The Cytoplasmic segment spans residues 1–25; sequence MPSGSGFQNIEEAGEKARRRDDWIA. A helical transmembrane segment spans residues 26–46; it reads ISNFHPGWFSVNMGTGITAIL. Over 47 to 59 the chain is Extracellular; that stretch reads LQNLPYQFPGLHY. A helical transmembrane segment spans residues 60 to 80; sequence IAVVLFVLNVIIFFFFLTISI. At 81–101 the chain is on the cytoplasmic side; sequence TRYALWPEKFKAMLAHPAHSM. Residues 102 to 122 traverse the membrane as a helical segment; that stretch reads LLGTFPMGFATIINCIIFICV. At 123 to 135 the chain is on the extracellular side; the sequence is PVWGDWAARFAWG. Residues 136–156 form a helical membrane-spanning segment; it reads LWWVDATVSIAICYFVPFMLM. Residues 157 to 167 are Cytoplasmic-facing; it reads TKHTSSLETMT. Residues 168-188 traverse the membrane as a helical segment; that stretch reads AAWLLPIVAPVVAAASGGVVA. Residues 189 to 200 are Extracellular-facing; that stretch reads DALKNDTHALIT. Residue Asn-193 is glycosylated (N-linked (GlcNAc...) asparagine). Residues 201 to 221 form a helical membrane-spanning segment; it reads ILVCYVMWGSAVPLAMVILVI. At 222-234 the chain is on the cytoplasmic side; the sequence is YFQRLALHKLVPR. Residues 235–255 traverse the membrane as a helical segment; the sequence is AAIVSALLPIGPLGQGGFGLM. The Extracellular portion of the chain corresponds to 256–277; the sequence is QLGVVARRVFPRLDFLAPIAGE. The helical transmembrane segment at 278–298 threads the bilayer; that stretch reads IFYVMGAFIAMIMWGFGLIWL. Residues 299–309 lie on the Cytoplasmic side of the membrane; sequence WFALASFTRGK. The helical transmembrane segment at 310 to 330 threads the bilayer; the sequence is FYFNIGWWAFTFPLGVFTTAT. The Extracellular portion of the chain corresponds to 331–343; sequence TQMGKEFNSVVFD. Residues 344–364 form a helical membrane-spanning segment; the sequence is VLGTFFSIVVAAMWVMVFALT. At 365–375 the chain is on the cytoplasmic side; that stretch reads VYKSCTKELFK.

The protein belongs to the tellurite-resistance/dicarboxylate transporter (TDT) family.

Its subcellular location is the cell membrane. Functionally, sulphite efflux pump required for the secretion of sulphite as a reducing agent. In the presence of sulphite, cystine in keratin is directly cleaved to cysteine and S-sulphocysteine, and thereby, reduced proteins become accessible to hydrolysis by a variety of secreted endo- and exoproteases. Excretion of sulphite mediated by an efflux pump also represents a detoxification pathway for dermatophytes during infection of the epidermal stratum corneum, hair and nails, which are rich in cysteine. This chain is Sulfite efflux pump SSU1 (SSU1), found in Arthroderma otae (strain ATCC MYA-4605 / CBS 113480) (Microsporum canis).